Here is a 205-residue protein sequence, read N- to C-terminus: MKYTGSIFKRSRRLGFSLLENNKEFSKGKKRKSIPGQHGNRFRSSTLSGYAQQLQEKQRMQYMYGITDKQFRRLFRFVLKQKGNLTVNLFRVLESRLDNIVYRMGFAPTRKSARQMVNHGHVILNDQTVDTPSIIINPGDKVRLKARITKSPLVKNFIENSVISSFVETNKKAFEGTYIRFPERSELPAGINESYVVEWYKRLVK.

One can recognise an S4 RNA-binding domain in the interval Ser95 to Ile158.

This sequence belongs to the universal ribosomal protein uS4 family. As to quaternary structure, part of the 30S ribosomal subunit. Contacts protein S5. The interaction surface between S4 and S5 is involved in control of translational fidelity.

In terms of biological role, one of the primary rRNA binding proteins, it binds directly to 16S rRNA where it nucleates assembly of the body of the 30S subunit. Its function is as follows. With S5 and S12 plays an important role in translational accuracy. This is Small ribosomal subunit protein uS4 from Mycoplasma genitalium (strain ATCC 33530 / DSM 19775 / NCTC 10195 / G37) (Mycoplasmoides genitalium).